Reading from the N-terminus, the 406-residue chain is Argininosuccinate synthase (406 aa).

Residues A11–S19 and A38 each bind ATP. L-citrulline is bound by residues Y91 and S96. G121 lines the ATP pocket. T123, N127, and D128 together coordinate L-aspartate. N127 contributes to the L-citrulline binding site. Residues R131, S181, S190, E266, and Y278 each coordinate L-citrulline.

It belongs to the argininosuccinate synthase family. Type 1 subfamily. In terms of assembly, homotetramer.

Its subcellular location is the cytoplasm. The catalysed reaction is L-citrulline + L-aspartate + ATP = 2-(N(omega)-L-arginino)succinate + AMP + diphosphate + H(+). It functions in the pathway amino-acid biosynthesis; L-arginine biosynthesis; L-arginine from L-ornithine and carbamoyl phosphate: step 2/3. The protein is Argininosuccinate synthase of Campylobacter jejuni subsp. jejuni serotype O:6 (strain 81116 / NCTC 11828).